The sequence spans 172 residues: Neudesin (172 aa).

Residues 1-31 (MVGPAPRRRLRPLAALALVLALAPGLPTARA) form the signal peptide. Residues 44–129 (VRLFTEEELA…KELEALDEVF (86 aa)) enclose the Cytochrome b5 heme-binding domain. N6-acetyllysine is present on Lys136. A disordered region spans residues 151–172 (DGSPNLDFKPEDQPHFDIKDEF). Over residues 158–172 (FKPEDQPHFDIKDEF) the composition is skewed to basic and acidic residues.

Belongs to the cytochrome b5 family. MAPR subfamily. In terms of assembly, interacts with PINK1 and PARK7. As to expression, ubiquitously expressed with high expression in heart. Over-expressed in various tumors including carcinomas of the uterine cervix, lymphoma, colon, lung, skin and leukemia, as well as carcinoma of the breast.

The protein resides in the secreted. Its subcellular location is the extracellular space. It is found in the mitochondrion. It localises to the endoplasmic reticulum. Functionally, acts as a neurotrophic factor in postnatal mature neurons enhancing neuronal survival. Promotes cell proliferation and neurogenesis in undifferentiated neural progenitor cells at the embryonic stage and inhibits differentiation of astrocytes. Its neurotrophic activity is exerted via MAPK1/ERK2, MAPK3/ERK1 and AKT1/AKT pathways. Neurotrophic activity is enhanced by binding to heme. Also acts as an anorexigenic neurotrophic factor that contributes to energy balance. This Homo sapiens (Human) protein is Neudesin.